We begin with the raw amino-acid sequence, 238 residues long: 1-(5-phosphoribosyl)-5-[(5-phosphoribosylamino)methylideneamino] imidazole-4-carboxamide isomerase (238 aa).

The active-site Proton acceptor is the Asp-8. The active-site Proton donor is Asp-129.

This sequence belongs to the HisA/HisF family.

Its subcellular location is the cytoplasm. The enzyme catalyses 1-(5-phospho-beta-D-ribosyl)-5-[(5-phospho-beta-D-ribosylamino)methylideneamino]imidazole-4-carboxamide = 5-[(5-phospho-1-deoxy-D-ribulos-1-ylimino)methylamino]-1-(5-phospho-beta-D-ribosyl)imidazole-4-carboxamide. It functions in the pathway amino-acid biosynthesis; L-histidine biosynthesis; L-histidine from 5-phospho-alpha-D-ribose 1-diphosphate: step 4/9. The polypeptide is 1-(5-phosphoribosyl)-5-[(5-phosphoribosylamino)methylideneamino] imidazole-4-carboxamide isomerase (Myxococcus xanthus (strain DK1622)).